The primary structure comprises 276 residues: Undecaprenyl-diphosphatase 1 (276 aa).

Helical transmembrane passes span 85-105, 108-128, 187-207, 217-237, and 253-273; these read MNVV…EKTI, VLFA…VILW, VATE…TLYE, VDSI…AFAC, and FAWY…SGWI.

It belongs to the UppP family.

The protein resides in the cell inner membrane. The catalysed reaction is di-trans,octa-cis-undecaprenyl diphosphate + H2O = di-trans,octa-cis-undecaprenyl phosphate + phosphate + H(+). Functionally, catalyzes the dephosphorylation of undecaprenyl diphosphate (UPP). Confers resistance to bacitracin. This is Undecaprenyl-diphosphatase 1 from Burkholderia thailandensis (strain ATCC 700388 / DSM 13276 / CCUG 48851 / CIP 106301 / E264).